A 412-amino-acid polypeptide reads, in one-letter code: L-cysteine:1D-myo-inositol 2-amino-2-deoxy-alpha-D-glucopyranoside ligase (412 aa).

Cys45 serves as a coordination point for Zn(2+). Residues 45–48 (CGIT), Thr60, and 83–85 (NIT) each bind L-cysteinyl-5'-AMP. The 'HIGH' region signature appears at 47–57 (ITPYDAAHLGH). Residues 185–190 (ERGGDP) carry the 'ERGGDP' region motif. An L-cysteinyl-5'-AMP-binding site is contributed by Trp225. A Zn(2+)-binding site is contributed by Cys229. L-cysteinyl-5'-AMP is bound at residue 247–249 (GDD). His254 is a Zn(2+) binding site. Residue Val281 participates in L-cysteinyl-5'-AMP binding. The short motif at 287 to 291 (KMSKS) is the 'KMSKS' region element.

It belongs to the class-I aminoacyl-tRNA synthetase family. MshC subfamily. As to quaternary structure, monomer. The cofactor is Zn(2+).

The catalysed reaction is 1D-myo-inositol 2-amino-2-deoxy-alpha-D-glucopyranoside + L-cysteine + ATP = 1D-myo-inositol 2-(L-cysteinylamino)-2-deoxy-alpha-D-glucopyranoside + AMP + diphosphate + H(+). Functionally, catalyzes the ATP-dependent condensation of GlcN-Ins and L-cysteine to form L-Cys-GlcN-Ins. The polypeptide is L-cysteine:1D-myo-inositol 2-amino-2-deoxy-alpha-D-glucopyranoside ligase (Thermobifida fusca (strain YX)).